We begin with the raw amino-acid sequence, 175 residues long: Nucleoside triphosphate/diphosphate phosphatase (175 aa).

The active-site Proton donor is the Arg-23. Mg(2+)-binding residues include Asn-87, Asp-103, Asp-105, Asp-107, Asp-120, and Glu-123.

It belongs to the Ntdp family. It depends on Mg(2+) as a cofactor.

It catalyses the reaction a ribonucleoside 5'-triphosphate + H2O = a ribonucleoside 5'-diphosphate + phosphate + H(+). The catalysed reaction is a ribonucleoside 5'-diphosphate + H2O = a ribonucleoside 5'-phosphate + phosphate + H(+). Functionally, has nucleoside phosphatase activity towards nucleoside triphosphates and nucleoside diphosphates. This chain is Nucleoside triphosphate/diphosphate phosphatase, found in Listeria monocytogenes serotype 4b (strain CLIP80459).